A 141-amino-acid chain; its full sequence is Large ribosomal subunit protein uL11 (141 aa).

It belongs to the universal ribosomal protein uL11 family. In terms of assembly, part of the ribosomal stalk of the 50S ribosomal subunit. Interacts with L10 and the large rRNA to form the base of the stalk. L10 forms an elongated spine to which L12 dimers bind in a sequential fashion forming a multimeric L10(L12)X complex. One or more lysine residues are methylated.

In terms of biological role, forms part of the ribosomal stalk which helps the ribosome interact with GTP-bound translation factors. In Prochlorococcus marinus (strain MIT 9215), this protein is Large ribosomal subunit protein uL11.